We begin with the raw amino-acid sequence, 422 residues long: Histidine--tRNA ligase (422 aa).

The protein belongs to the class-II aminoacyl-tRNA synthetase family. Homodimer.

It localises to the cytoplasm. It carries out the reaction tRNA(His) + L-histidine + ATP = L-histidyl-tRNA(His) + AMP + diphosphate + H(+). The polypeptide is Histidine--tRNA ligase (Vibrio vulnificus (strain CMCP6)).